Consider the following 547-residue polypeptide: MSTDTAPAQTMHAGRLIARRLKASGIDTVFTLSGGHLFSIYDGCREEGIRLIDTRHEQTAAFAAEGWSKVTRVPGVAALTAGPGITNGMSAMAAAQQNQSPLVVLGGRAPALRWGMGSLQEIDHVPFVAPVARFAATAQSAENAGLLVDQALQAAVSAPSGVAFVDFPMDHAFSMSSDNGRPGALTELPAGPTPAGDALDRAAGLLSTAQRPVIMAGTNVWWGHAEAALLRLVEERHIPVLMNGMARGVVPADHRLAFSRARSKALGEADVALIVGVPMDFRLGFGGVFGSTTQLIVADRVEPAREHPRPVAAGLYGDLTATLSALAGSGGTDHQGWIEELATAETMARDLEKAELVDDRIPLHPMRVYAELAALLERDALVVIDAGDFGSYAGRMIDSYLPGCWLDSGPFGCLGSGPGYALAAKLARPQRQVVLLQGDGAFGFSGMEWDTLVRHNVAVVSVIGNNGIWGLEKHPMEALYGYSVVAELRPGTRYDEVVRALGGHGELVSVPAELRPALERAFASGLPAVVNVLTDPSVAYPRRSNLA.

E57 lines the thiamine diphosphate pocket. Residues P159 and 299–318 contribute to the FAD site; that span reads DRVE…LYGD. The segment at 388–468 is thiamine pyrophosphate binding; that stretch reads DFGSYAGRMI…VVSVIGNNGI (81 aa). Mg(2+) is bound by residues D439 and N466.

It belongs to the TPP enzyme family. Mg(2+) is required as a cofactor. The cofactor is thiamine diphosphate.

The enzyme catalyses 2 pyruvate + H(+) = (2S)-2-acetolactate + CO2. The protein operates within amino-acid biosynthesis; L-isoleucine biosynthesis; L-isoleucine from 2-oxobutanoate: step 1/4. Its pathway is amino-acid biosynthesis; L-valine biosynthesis; L-valine from pyruvate: step 1/4. In Mycobacterium bovis (strain ATCC BAA-935 / AF2122/97), this protein is Probable acetolactate synthase (ilvG).